The primary structure comprises 718 residues: Polyribonucleotide nucleotidyltransferase (718 aa).

Mg(2+)-binding residues include aspartate 496 and aspartate 502. Positions 563–622 (PRLLTIKIDSDMIGLVIGPGGKTIKGITEETGAKIDIEDDGTVTISAVDENKAKRARNII) constitute a KH domain. Positions 632–700 (GDVYAGRITR…NKGRINLTRL (69 aa)) constitute an S1 motif domain.

This sequence belongs to the polyribonucleotide nucleotidyltransferase family. Mg(2+) is required as a cofactor.

The protein resides in the cytoplasm. The catalysed reaction is RNA(n+1) + phosphate = RNA(n) + a ribonucleoside 5'-diphosphate. Involved in mRNA degradation. Catalyzes the phosphorolysis of single-stranded polyribonucleotides processively in the 3'- to 5'-direction. In Nostoc punctiforme (strain ATCC 29133 / PCC 73102), this protein is Polyribonucleotide nucleotidyltransferase.